A 695-amino-acid polypeptide reads, in one-letter code: Polyribonucleotide nucleotidyltransferase (695 aa).

Mg(2+)-binding residues include D488 and D494. The KH domain occupies 554 to 613 (PKTTIIKIKTDKIRDLIGRGGETIKGIISTSCASIDVDDSGNVNIFSNNQKSFDTAVQMV). The S1 motif domain occupies 623-690 (NKVYTGKVVK…DRGRIKLSRK (68 aa)).

Belongs to the polyribonucleotide nucleotidyltransferase family. Component of the RNA degradosome, which is a multiprotein complex involved in RNA processing and mRNA degradation. Mg(2+) serves as cofactor.

The protein localises to the cytoplasm. The catalysed reaction is RNA(n+1) + phosphate = RNA(n) + a ribonucleoside 5'-diphosphate. In terms of biological role, involved in mRNA degradation. Catalyzes the phosphorolysis of single-stranded polyribonucleotides processively in the 3'- to 5'-direction. The sequence is that of Polyribonucleotide nucleotidyltransferase from Vesicomyosocius okutanii subsp. Calyptogena okutanii (strain HA).